The primary structure comprises 447 residues: Probable glycine dehydrogenase (decarboxylating) subunit 1 (447 aa).

It belongs to the GcvP family. N-terminal subunit subfamily. In terms of assembly, the glycine cleavage system is composed of four proteins: P, T, L and H. In this organism, the P 'protein' is a heterodimer of two subunits.

The catalysed reaction is N(6)-[(R)-lipoyl]-L-lysyl-[glycine-cleavage complex H protein] + glycine + H(+) = N(6)-[(R)-S(8)-aminomethyldihydrolipoyl]-L-lysyl-[glycine-cleavage complex H protein] + CO2. In terms of biological role, the glycine cleavage system catalyzes the degradation of glycine. The P protein binds the alpha-amino group of glycine through its pyridoxal phosphate cofactor; CO(2) is released and the remaining methylamine moiety is then transferred to the lipoamide cofactor of the H protein. In Beijerinckia indica subsp. indica (strain ATCC 9039 / DSM 1715 / NCIMB 8712), this protein is Probable glycine dehydrogenase (decarboxylating) subunit 1.